Here is a 787-residue protein sequence, read N- to C-terminus: tRNA ligase 1 (787 aa).

The N6-AMP-lysine intermediate role is filled by Lys-117.

This sequence belongs to the TRL1 family.

It localises to the cytoplasm. The enzyme catalyses ATP + (ribonucleotide)n-3'-hydroxyl + 5'-phospho-(ribonucleotide)m = (ribonucleotide)n+m + AMP + diphosphate.. Functionally, required for the splicing of precursor tRNA molecules containing introns. The ligation activity requires three enzymatic activities: phosphorylation of the 5' terminus of the 3' half-tRNA in the presence of ATP, opening of the 2'3'-cyclic phosphodiester bond of the 5' half-tRNA leaving a 2'-phosphomonoester and ligation of the two tRNA halves in an ATP-dependent reaction. The protein is tRNA ligase 1 (trl1) of Schizosaccharomyces pombe (strain 972 / ATCC 24843) (Fission yeast).